Here is a 328-residue protein sequence, read N- to C-terminus: D-cysteine desulfhydrase (328 aa).

Lys51 carries the post-translational modification N6-(pyridoxal phosphate)lysine.

This sequence belongs to the ACC deaminase/D-cysteine desulfhydrase family. As to quaternary structure, homodimer. It depends on pyridoxal 5'-phosphate as a cofactor.

The catalysed reaction is D-cysteine + H2O = hydrogen sulfide + pyruvate + NH4(+) + H(+). Its function is as follows. Catalyzes the alpha,beta-elimination reaction of D-cysteine and of several D-cysteine derivatives. It could be a defense mechanism against D-cysteine. The protein is D-cysteine desulfhydrase of Salmonella typhimurium (strain LT2 / SGSC1412 / ATCC 700720).